The primary structure comprises 308 residues: uncharacterized protein (308 aa).

An N-terminal signal peptide occupies residues 1-17 (MKSLALLLSLLINFSIG). N-linked (GlcNAc...) asparagine glycans are attached at residues Asn-13, Asn-91, Asn-159, and Asn-210. The segment at 213–308 (DEISGGTGAG…HDNYISSFCT (96 aa)) is disordered. Gly residues-rich tracts occupy residues 217 to 231 (GGTG…GSGS) and 239 to 252 (SDGG…GSGS). Residues 267–284 (NKNNNKNKNNNNNNNNYN) show a composition bias toward low complexity.

Its subcellular location is the secreted. This is an uncharacterized protein from Dictyostelium discoideum (Social amoeba).